The chain runs to 621 residues: 1-deoxy-D-xylulose-5-phosphate synthase (621 aa).

Residues His-80 and 121-123 (GHS) contribute to the thiamine diphosphate site. Asp-152 contacts Mg(2+). Thiamine diphosphate-binding positions include 153 to 154 (GA), Asn-181, Tyr-288, and Glu-370. Mg(2+) is bound at residue Asn-181.

This sequence belongs to the transketolase family. DXPS subfamily. In terms of assembly, homodimer. Mg(2+) serves as cofactor. Thiamine diphosphate is required as a cofactor.

It catalyses the reaction D-glyceraldehyde 3-phosphate + pyruvate + H(+) = 1-deoxy-D-xylulose 5-phosphate + CO2. It participates in metabolic intermediate biosynthesis; 1-deoxy-D-xylulose 5-phosphate biosynthesis; 1-deoxy-D-xylulose 5-phosphate from D-glyceraldehyde 3-phosphate and pyruvate: step 1/1. Its function is as follows. Catalyzes the acyloin condensation reaction between C atoms 2 and 3 of pyruvate and glyceraldehyde 3-phosphate to yield 1-deoxy-D-xylulose-5-phosphate (DXP). In Shewanella sediminis (strain HAW-EB3), this protein is 1-deoxy-D-xylulose-5-phosphate synthase.